The chain runs to 593 residues: Probable metalloendopeptidase G1-type (593 aa).

H41 contacts Zn(2+). E44 is an active-site residue. H45 is a binding site for Zn(2+).

This sequence belongs to the peptidase M44 family. Requires Zn(2+) as cofactor.

Seems to be involved in viral proteins maturation by cleavage at Ala-Gly-|-Xaa motifs. The sequence is that of Probable metalloendopeptidase G1-type from Homo sapiens (Human).